Reading from the N-terminus, the 34-residue chain is Potassium channel toxin alpha-KTx 6.3 (34 aa).

4 disulfides stabilise this stretch: cysteine 3/cysteine 24, cysteine 9/cysteine 29, cysteine 13/cysteine 31, and cysteine 19/cysteine 34. Cysteine 34 carries the cysteine amide modification.

This sequence belongs to the short scorpion toxin superfamily. Potassium channel inhibitor family. Alpha-KTx 06 subfamily. Post-translationally, amidated. The amidated toxin shows 5-fold more affinity for Kv1.3/KCNA3 than the synthetic carboxylated form. As to expression, expressed by the venom gland.

The protein resides in the secreted. Its function is as follows. Potently blocks voltage-gated potassium channels Kv1.1/KCNA1 (IC(50)=7-11 nM) and Kv1.3/KCNA3 (IC(50)=11-29 pM). Also mildly blocks intermediate (IK) conductance calcium-activated potassium channels (KCa3.1/KCNN4) and ERG1/Kv11.1/KCNH2. Shows ability to suppress proliferation of lymphocytes, which are known to be sensitive to Kv1.3/KCNA3 homotetrameric channel block. This Heterometrus spinifer (Asia giant forest scorpion) protein is Potassium channel toxin alpha-KTx 6.3.